Here is a 382-residue protein sequence, read N- to C-terminus: Ribosomal RNA large subunit methyltransferase G (382 aa).

This sequence belongs to the methyltransferase superfamily. RlmG family.

Its subcellular location is the cytoplasm. It carries out the reaction guanosine(1835) in 23S rRNA + S-adenosyl-L-methionine = N(2)-methylguanosine(1835) in 23S rRNA + S-adenosyl-L-homocysteine + H(+). Functionally, specifically methylates the guanine in position 1835 (m2G1835) of 23S rRNA. The polypeptide is Ribosomal RNA large subunit methyltransferase G (Aliivibrio fischeri (strain ATCC 700601 / ES114) (Vibrio fischeri)).